We begin with the raw amino-acid sequence, 467 residues long: Geranylgeranyl diphosphate reductase, chloroplastic (467 aa).

A chloroplast-targeting transit peptide spans 1–43 (MATTVTLKSFTGLRQSSTEQTNFVSHVPSSLSLPQRRTSLRVT).

This sequence belongs to the geranylgeranyl reductase family. ChlP subfamily. Part of the FLU-containing chloroplast membrane complex composed of FLU, CRD1, PORB, PORC, CHLP and HEMA1.

It is found in the plastid. The protein resides in the chloroplast membrane. The catalysed reaction is phytyl diphosphate + 3 NADP(+) = geranylgeranyl diphosphate + 3 NADPH + 3 H(+). Its pathway is porphyrin-containing compound metabolism; chlorophyll biosynthesis. It functions in the pathway cofactor biosynthesis; tocopherol biosynthesis. Functionally, catalyzes the reduction of geranylgeranyl diphosphate to phytyl diphosphate, providing phytol for both tocopherol and chlorophyll synthesis. This is Geranylgeranyl diphosphate reductase, chloroplastic (CHLP) from Arabidopsis thaliana (Mouse-ear cress).